Reading from the N-terminus, the 257-residue chain is UPF0246 protein AHA_3667 (257 aa).

Belongs to the UPF0246 family.

This is UPF0246 protein AHA_3667 from Aeromonas hydrophila subsp. hydrophila (strain ATCC 7966 / DSM 30187 / BCRC 13018 / CCUG 14551 / JCM 1027 / KCTC 2358 / NCIMB 9240 / NCTC 8049).